The following is a 1377-amino-acid chain: MKEIKDFERIKIKIASPDQIRNWSYGEVKKSETINYRTLRPEKDGLFCERIFGTTKEWECYCGKFKSVRYKGIICDRCNVEVTHFKVRRERMGHIELAAPVAHIWYYKYIPSRIGLLLDITASSLNSILYYEKYVVIEPGDTDLKKMQLLNEDEYIEARERYGMSFNASMGAEAIKTLLENLDLDELSSKLRIQMIDKDDKTDKKLLRRLEIIENFKISGNKPEWMIMEVLPVIPPEIRPMVQLDGGRFATSDLNDLYRRVINRNNRLRKLLLLNAPEIIVRNEKRMLQESVDSLFDNSHKRKVVKGSSSRPLKSLSDALKGKQGRFRQNLLGKRVDYSGRSVIVVGPELKLHQCGLPAKMALELFKPFVIRRLIESEAVFNIKRAKNLIEQEVDEVWQILDLVIKEHPILLNRAPTLHRLGIQAFEPVLVEGKAIKLHPLVCHAYNADFDGDQMAVHVPLTPAAQAESWALMLSTNNLLNPANGHPIVFPSQDIVLGLYYLTMEKKNVVGEGKKFLNFNNVILAINNRSLDYNASIYVKIHGEYKKTTAGRVIFNEALPKGIEFVNKTLSDLELQILISKVYVVHGSSIVIEMLDIIKELGFRYATKFGCTISMSDIIVPDEKRTYVERANKEIAKIQNDYAKGVITGEERYNNVVSVWLKTNEELTNKMMEILKKDRDGFNVIYMMADSGARGSRNQIRQLAGMRGLMAKTSGDIIELPIISNFKEGLSVIEFFISTNGARKGLADTALKTADAGYLTRRLVDIAQDVVVRIEDCGTINGIKVETVKNGEEILESLKEKAVGSYSIERIKNPITGEIVLDANEEISEAKIELLEKIGIEKLVIRSVLTCEAEHGVCQKCYGRDFSKNKPVNIGEAVGIIAAQSIGQPGTQLTMRTFHIGGVAQAGSEDDKISLKNAFILNGIEGFNVRVDNGILFTRKGTLKIINVFYEEKIKNIKEIKVLDSQRVIKGIPLFIDKKGSEILSSYIGYVKLRDDNFFIVSEEQEVSLKAGTKLEIEVGDYVESGKVIGTFDPFAEPIIAEVKGKIKFKDIILGTTLKEEINTETGNVEKRITDNVFESLDPRIFIIDSSGMEVASYVLPGDAYLQVEDGQSINIGDIIAKLSKGSEKTQDITGGLPRVNDLFETRIPKNLTEMAKVSGIVQFKSIQKGKRLINILDEYGVEHKHYIPAGKHLLVRDGDVVKAGDMLCDGRINPHDVLEILGGISLQEFLLAEIQDVYRKQGVSINDKHIGVIIKQMMKKVKIVAVGDTNFVYGQKVDKHTFYEQNRKVIEQGGEPAIASPILIGVTKTSLNIDSFISAASFQETTKVLTDASIAGKIDDLRGLKENVVIGHLIPTGTGMGLYKKIKVSENIDSEV.

Residues Cys60, Cys62, Cys75, and Cys78 each contribute to the Zn(2+) site. 3 residues coordinate Mg(2+): Asp449, Asp451, and Asp453. Residues Cys777, Cys851, Cys858, and Cys861 each contribute to the Zn(2+) site.

It belongs to the RNA polymerase beta' chain family. The RNAP catalytic core consists of 2 alpha, 1 beta, 1 beta' and 1 omega subunit. When a sigma factor is associated with the core the holoenzyme is formed, which can initiate transcription. It depends on Mg(2+) as a cofactor. Requires Zn(2+) as cofactor.

The enzyme catalyses RNA(n) + a ribonucleoside 5'-triphosphate = RNA(n+1) + diphosphate. Functionally, DNA-dependent RNA polymerase catalyzes the transcription of DNA into RNA using the four ribonucleoside triphosphates as substrates. This chain is DNA-directed RNA polymerase subunit beta', found in Borreliella burgdorferi (strain ATCC 35210 / DSM 4680 / CIP 102532 / B31) (Borrelia burgdorferi).